Consider the following 404-residue polypeptide: Putative aspartate aminotransferase, cytoplasmic 2 (404 aa).

Lysine 249 bears the N6-(pyridoxal phosphate)lysine mark.

The protein belongs to the class-I pyridoxal-phosphate-dependent aminotransferase family. Homodimer. Pyridoxal 5'-phosphate serves as cofactor.

It localises to the cytoplasm. The enzyme catalyses L-aspartate + 2-oxoglutarate = oxaloacetate + L-glutamate. This Mus musculus (Mouse) protein is Putative aspartate aminotransferase, cytoplasmic 2 (Got1l1).